We begin with the raw amino-acid sequence, 286 residues long: MSAIDDLPPLREVIREHQLSARKALGQNFLLDLNLTARIARAAGPLEDATVVEIGPGPGGLTRALLALGARHVIAVEHDERAIPALQAIAERYPGRLEIVCTDARTFDVRPYLGSTKAKIVANLPYNIATHLLIGWLSAEPWPPWYDMMVLMFQREVAERIVARENEEAYGRLGVLANWRCETKILFDISPSAFVPPPKVTSSVVRLVPRTAPEPCDRRALEQVAAAAFGQRRKMLRQSLKSLPTDPARLAAAAGVDPTRRAETIPVSGFVAMARELTNSRDDNKT.

N28, L30, G55, E77, D103, and N123 together coordinate S-adenosyl-L-methionine.

This sequence belongs to the class I-like SAM-binding methyltransferase superfamily. rRNA adenine N(6)-methyltransferase family. RsmA subfamily.

The protein localises to the cytoplasm. It carries out the reaction adenosine(1518)/adenosine(1519) in 16S rRNA + 4 S-adenosyl-L-methionine = N(6)-dimethyladenosine(1518)/N(6)-dimethyladenosine(1519) in 16S rRNA + 4 S-adenosyl-L-homocysteine + 4 H(+). In terms of biological role, specifically dimethylates two adjacent adenosines (A1518 and A1519) in the loop of a conserved hairpin near the 3'-end of 16S rRNA in the 30S particle. May play a critical role in biogenesis of 30S subunits. This is Ribosomal RNA small subunit methyltransferase A from Bradyrhizobium sp. (strain BTAi1 / ATCC BAA-1182).